The chain runs to 546 residues: 2-isopropylmalate synthase (546 aa).

The region spanning 8-271 (ILIFDTTLRD…NSFFKRNPDS (264 aa)) is the Pyruvate carboxyltransferase domain. Mn(2+) contacts are provided by D17, H208, H210, and N244. Residues 408-546 (QLSLVQVSCG…TNTFLSNNAN (139 aa)) are regulatory domain.

This sequence belongs to the alpha-IPM synthase/homocitrate synthase family. LeuA type 1 subfamily. Homodimer. Mn(2+) is required as a cofactor.

The protein localises to the cytoplasm. The enzyme catalyses 3-methyl-2-oxobutanoate + acetyl-CoA + H2O = (2S)-2-isopropylmalate + CoA + H(+). It participates in amino-acid biosynthesis; L-leucine biosynthesis; L-leucine from 3-methyl-2-oxobutanoate: step 1/4. Its function is as follows. Catalyzes the condensation of the acetyl group of acetyl-CoA with 3-methyl-2-oxobutanoate (2-ketoisovalerate) to form 3-carboxy-3-hydroxy-4-methylpentanoate (2-isopropylmalate). The sequence is that of 2-isopropylmalate synthase from Prochlorococcus marinus (strain AS9601).